Here is a 451-residue protein sequence, read N- to C-terminus: Tubulin beta-1 chain (451 aa).

Positions 11, 73, 142, 146, 147, 148, 208, and 230 each coordinate GTP. Glu-73 lines the Mg(2+) pocket. The disordered stretch occupies residues 430–451; sequence QEATADDEAEFEEEGEVEGEYA. The span at 433-451 shows a compositional bias: acidic residues; it reads TADDEAEFEEEGEVEGEYA.

The protein belongs to the tubulin family. In terms of assembly, dimer of alpha and beta chains. A typical microtubule is a hollow water-filled tube with an outer diameter of 25 nm and an inner diameter of 15 nM. Alpha-beta heterodimers associate head-to-tail to form protofilaments running lengthwise along the microtubule wall with the beta-tubulin subunit facing the microtubule plus end conferring a structural polarity. Microtubules usually have 13 protofilaments but different protofilament numbers can be found in some organisms and specialized cells. Requires Mg(2+) as cofactor.

The protein localises to the cytoplasm. The protein resides in the cytoskeleton. Its function is as follows. Tubulin is the major constituent of microtubules, a cylinder consisting of laterally associated linear protofilaments composed of alpha- and beta-tubulin heterodimers. Microtubules grow by the addition of GTP-tubulin dimers to the microtubule end, where a stabilizing cap forms. Below the cap, tubulin dimers are in GDP-bound state, owing to GTPase activity of alpha-tubulin. This chain is Tubulin beta-1 chain, found in Homarus americanus (American lobster).